Reading from the N-terminus, the 189-residue chain is Protein GrpE (189 aa).

Over residues Met-1 to Thr-14 the composition is skewed to basic and acidic residues. Residues Met-1–Ala-23 are disordered.

It belongs to the GrpE family. In terms of assembly, homodimer.

It localises to the cytoplasm. Its function is as follows. Participates actively in the response to hyperosmotic and heat shock by preventing the aggregation of stress-denatured proteins, in association with DnaK and GrpE. It is the nucleotide exchange factor for DnaK and may function as a thermosensor. Unfolded proteins bind initially to DnaJ; upon interaction with the DnaJ-bound protein, DnaK hydrolyzes its bound ATP, resulting in the formation of a stable complex. GrpE releases ADP from DnaK; ATP binding to DnaK triggers the release of the substrate protein, thus completing the reaction cycle. Several rounds of ATP-dependent interactions between DnaJ, DnaK and GrpE are required for fully efficient folding. This Lawsonia intracellularis (strain PHE/MN1-00) protein is Protein GrpE.